A 91-amino-acid polypeptide reads, in one-letter code: Small ribosomal subunit protein uS19 (91 aa).

This sequence belongs to the universal ribosomal protein uS19 family.

Its function is as follows. Protein S19 forms a complex with S13 that binds strongly to the 16S ribosomal RNA. In Metamycoplasma hominis (strain ATCC 23114 / DSM 25592 / NBRC 14850 / NCTC 10111 / PG21) (Mycoplasma hominis), this protein is Small ribosomal subunit protein uS19.